The primary structure comprises 63 residues: Large ribosomal subunit protein bL28 (63 aa).

It belongs to the bacterial ribosomal protein bL28 family.

In Clostridium perfringens (strain SM101 / Type A), this protein is Large ribosomal subunit protein bL28.